Reading from the N-terminus, the 427-residue chain is Enolase (427 aa).

Glutamine 163 contributes to the (2R)-2-phosphoglycerate binding site. Residue glutamate 205 is the Proton donor of the active site. Positions 242, 285, and 312 each coordinate Mg(2+). Lysine 337, arginine 366, serine 367, and lysine 388 together coordinate (2R)-2-phosphoglycerate. The Proton acceptor role is filled by lysine 337.

This sequence belongs to the enolase family. Requires Mg(2+) as cofactor.

It localises to the cytoplasm. Its subcellular location is the secreted. It is found in the cell surface. The enzyme catalyses (2R)-2-phosphoglycerate = phosphoenolpyruvate + H2O. Its pathway is carbohydrate degradation; glycolysis; pyruvate from D-glyceraldehyde 3-phosphate: step 4/5. Functionally, catalyzes the reversible conversion of 2-phosphoglycerate (2-PG) into phosphoenolpyruvate (PEP). It is essential for the degradation of carbohydrates via glycolysis. This Burkholderia lata (strain ATCC 17760 / DSM 23089 / LMG 22485 / NCIMB 9086 / R18194 / 383) protein is Enolase.